The following is a 322-amino-acid chain: Ferredoxin--NADP reductase (322 aa).

Asp34, Gln42, Tyr47, Val87, Phe120, Asp279, and Thr320 together coordinate FAD.

The protein belongs to the ferredoxin--NADP reductase type 2 family. Homodimer. FAD is required as a cofactor.

The enzyme catalyses 2 reduced [2Fe-2S]-[ferredoxin] + NADP(+) + H(+) = 2 oxidized [2Fe-2S]-[ferredoxin] + NADPH. The sequence is that of Ferredoxin--NADP reductase from Streptococcus pneumoniae serotype 2 (strain D39 / NCTC 7466).